A 525-amino-acid polypeptide reads, in one-letter code: uncharacterized protein (525 aa).

A Phosphoserine modification is found at serine 55. 13 helical membrane-spanning segments follow: residues 81–101, 120–140, 147–167, 173–193, 208–228, 238–258, 295–315, 318–338, 350–370, 388–408, 413–433, 454–474, and 484–504; these read AYIVLLSTSLQMYVFWTPNFY, LLGQSMFVLGVALGPLFLGPL, KLVYIGSLIIYVCFCISCALA, LVISMLIMGVVGSTALGNVAG, MYMFIFMCSVASVGSPMGTGV, WLYWIDVIVGGFFIILFVFTP, FVFFMAIKIFFSEPIVSSLGI, GFVNGLLYFFLQAIWPVYFSI, YMAAMPACVILLWFEPLQCWL, FIMTLFYVWGFPIGIFMFAFC, IHYIVSLIGLTIFNIADYHIW, AFELPSNLGAVGFIHLSALMF, and AVVGFASLPLIALIYALYFYG.

It belongs to the major facilitator superfamily. CAR1 family.

The protein resides in the membrane. This is an uncharacterized protein from Schizosaccharomyces pombe (strain 972 / ATCC 24843) (Fission yeast).